The chain runs to 302 residues: Small ribosomal subunit protein uS3 (302 aa).

The region spanning 17 to 86 is the KH type-2 domain; that stretch reads IDEFFAEELA…DPQIDVQEVE (70 aa). Positions 222–302 are disordered; sequence EDADAEDADA…EMDDEDGGAE (81 aa).

This sequence belongs to the universal ribosomal protein uS3 family. As to quaternary structure, part of the 30S ribosomal subunit.

Functionally, binds the lower part of the 30S subunit head. The chain is Small ribosomal subunit protein uS3 from Halobacterium salinarum (strain ATCC 700922 / JCM 11081 / NRC-1) (Halobacterium halobium).